A 333-amino-acid polypeptide reads, in one-letter code: Elongation factor Ts, mitochondrial (333 aa).

A mitochondrion-targeting transit peptide spans 1–17 (MLRTLRPTLPSRCLRLY).

This sequence belongs to the EF-Ts family.

The protein localises to the mitochondrion. In terms of biological role, associates with the EF-Tu.GDP complex and induces the exchange of GDP to GTP. It remains bound to the aminoacyl-tRNA.EF-Tu.GTP complex up to the GTP hydrolysis stage on the ribosome. In Coprinopsis cinerea (strain Okayama-7 / 130 / ATCC MYA-4618 / FGSC 9003) (Inky cap fungus), this protein is Elongation factor Ts, mitochondrial.